The primary structure comprises 584 residues: Proline--tRNA ligase (584 aa).

The interval 242–261 (APPASNPEERPATQVHDTPD) is disordered.

Belongs to the class-II aminoacyl-tRNA synthetase family. ProS type 1 subfamily. Homodimer.

The protein localises to the cytoplasm. The catalysed reaction is tRNA(Pro) + L-proline + ATP = L-prolyl-tRNA(Pro) + AMP + diphosphate. In terms of biological role, catalyzes the attachment of proline to tRNA(Pro) in a two-step reaction: proline is first activated by ATP to form Pro-AMP and then transferred to the acceptor end of tRNA(Pro). As ProRS can inadvertently accommodate and process non-cognate amino acids such as alanine and cysteine, to avoid such errors it has two additional distinct editing activities against alanine. One activity is designated as 'pretransfer' editing and involves the tRNA(Pro)-independent hydrolysis of activated Ala-AMP. The other activity is designated 'posttransfer' editing and involves deacylation of mischarged Ala-tRNA(Pro). The misacylated Cys-tRNA(Pro) is not edited by ProRS. In Salinispora arenicola (strain CNS-205), this protein is Proline--tRNA ligase.